The primary structure comprises 160 residues: 3-dehydroquinate dehydratase (160 aa).

Residue Tyr-22 is the Proton acceptor of the active site. 3 residues coordinate substrate: Asn-73, His-79, and Asp-86. His-99 (proton donor) is an active-site residue. Substrate contacts are provided by residues 100–101 (IS) and Arg-110.

It belongs to the type-II 3-dehydroquinase family. Homododecamer.

The catalysed reaction is 3-dehydroquinate = 3-dehydroshikimate + H2O. Its pathway is metabolic intermediate biosynthesis; chorismate biosynthesis; chorismate from D-erythrose 4-phosphate and phosphoenolpyruvate: step 3/7. Functionally, catalyzes a trans-dehydration via an enolate intermediate. In Sulfurimonas denitrificans (strain ATCC 33889 / DSM 1251) (Thiomicrospira denitrificans (strain ATCC 33889 / DSM 1251)), this protein is 3-dehydroquinate dehydratase.